Here is a 303-residue protein sequence, read N- to C-terminus: N-acetyl-D-glucosamine kinase (303 aa).

Residues Gly4 to Lys11 and Gly133 to Phe140 contribute to the ATP site. Zn(2+) contacts are provided by His157, Cys177, Cys179, and Cys184.

Belongs to the ROK (NagC/XylR) family. NagK subfamily.

It catalyses the reaction N-acetyl-D-glucosamine + ATP = N-acetyl-D-glucosamine 6-phosphate + ADP + H(+). The protein operates within cell wall biogenesis; peptidoglycan recycling. In terms of biological role, catalyzes the phosphorylation of N-acetyl-D-glucosamine (GlcNAc) derived from cell-wall degradation, yielding GlcNAc-6-P. The polypeptide is N-acetyl-D-glucosamine kinase (Escherichia coli O139:H28 (strain E24377A / ETEC)).